A 132-amino-acid chain; its full sequence is MAKAAGKQKNVRKKAKRVVVDAVAHVHASFNNTIVTITDGQGNTLSWATAGGSGFRGSRKSTPFAAQIAAERAGEVAKEYGVQNLDVNIKGPGPGRESAIRALNSAGFNIHSITDVTPIPHNGCRPPKKRRV.

The protein belongs to the universal ribosomal protein uS11 family. Part of the 30S ribosomal subunit. Interacts with proteins S7 and S18. Binds to IF-3.

In terms of biological role, located on the platform of the 30S subunit, it bridges several disparate RNA helices of the 16S rRNA. Forms part of the Shine-Dalgarno cleft in the 70S ribosome. In Dichelobacter nodosus (strain VCS1703A), this protein is Small ribosomal subunit protein uS11.